The primary structure comprises 766 residues: MSIMLSISRRQNSYILLNHSRFLRRFSYDVDPRPEIKSESQEFVVVKFVKTLQNTPQHDWASSESLSALVVSSSSASPLVFSQITRRLGSYSLAISFFEYLDAKSQSLKRREESLSLALQSVIEFAGSEPDPRDKLLRLYEIAKEKNIPLTIVATKLLIRWFGRMGMVNQSVLVYERLDSNMKNSQVRNVVVDVLLRNGLVDDAFKVLDEMLQKESVFPPNRITADIVLHEVWKERLLTEEKIIALISRFSSHGVSPNSVWLTRFISSLCKNARANTAWDILSDLMKNKTPLEAPPFNALLSCLGRNMDISRMNDLVLKMDEVKIRPDVVTLGILINTLCKSRRVDEALEVFEQMRGKRTDDGNVIKADSIHFNTLIDGLCKVGRLKEAEELLVRMKLEERCVPNAVTYNCLIDGYCRAGKLETAKEVVSRMKEDEIKPNVVTVNTIVGGMCRHHGLNMAVVFFMDMEKEGVKGNVVTYMTLIHACCSVSNVEKAMYWYEKMLEAGCSPDAKIYYALISGLCQVRRDHDAIRVVEKLKEGGFSLDLLAYNMLIGLFCDKNNAEKVYEMLTDMEKEGKKPDSITYNTLISFFGKHKDFESVERMMEQMREDGLDPTVTTYGAVIDAYCSVGELDEALKLFKDMGLHSKVNPNTVIYNILINAFSKLGNFGQALSLKEEMKMKMVRPNVETYNALFKCLNEKTQGETLLKLMDEMVEQSCEPNQITMEILMERLSGSDELVKLRKFMQGYSVASPTEKASPFDVFSLG.

PPR repeat units lie at residues 151–181 (TIVA…LDSN), 184–218 (NSQV…ESVF), 221–257 (NRIT…GVSP), 258–292 (NSVW…KTPL), 293–327 (EAPP…KIRP), 328–358 (DVVT…MRGK), 369–404 (DSIH…RCVP), 405–439 (NAVT…EIKP), 440–474 (NVVT…GVKG), 475–509 (NVVT…GCSP), 510–544 (DAKI…GFSL), 545–579 (DLLA…GKKP), 580–614 (DSIT…GLDP), 615–650 (TVTT…KVNP), 651–685 (NTVI…MVRP), and 686–720 (NVET…SCEP).

It belongs to the PPR family. P subfamily.

The polypeptide is Pentatricopeptide repeat-containing protein At5g28460 (Arabidopsis thaliana (Mouse-ear cress)).